A 477-amino-acid polypeptide reads, in one-letter code: Argininosuccinate lyase (477 aa).

This sequence belongs to the lyase 1 family. Argininosuccinate lyase subfamily.

Its subcellular location is the cytoplasm. It catalyses the reaction 2-(N(omega)-L-arginino)succinate = fumarate + L-arginine. It functions in the pathway amino-acid biosynthesis; L-arginine biosynthesis; L-arginine from L-ornithine and carbamoyl phosphate: step 3/3. The sequence is that of Argininosuccinate lyase from Acinetobacter baumannii (strain AB307-0294).